The chain runs to 182 residues: Vomeronasal secretory protein 1 (182 aa).

An N-terminal signal peptide occupies residues 1-18 (MRALLLIISFCLVAVLQA). Asn30 is a glycosylation site (N-linked (GlcNAc...) asparagine). An intrachain disulfide couples Cys76 to Cys168.

It belongs to the calycin superfamily. Lipocalin family. Specifically expressed in vomeronasal and posterior glands of the nasal septum, the ducts of which open into the lumen of the vomeronasal organ.

It localises to the secreted. Functionally, transport of lipophilic molecules, possible pheromone-carrier. In Mus musculus (Mouse), this protein is Vomeronasal secretory protein 1 (Lcn3).